The chain runs to 209 residues: Regulator of G-protein signaling 1 (209 aa).

The disordered stretch occupies residues 18-42 (FFSASPKDSKEPSHSLLDDNKQKKR). Positions 24–38 (KDSKEPSHSLLDDNK) are enriched in basic and acidic residues. Residues 85–200 (SLEKLLANQM…LKSNIYLNLL (116 aa)) form the RGS domain.

As to quaternary structure, interacts with GNAI1 and GNAQ. Expressed in multiple tissues.

The protein resides in the cell membrane. Its subcellular location is the cytoplasm. It is found in the cytosol. Functionally, regulates G protein-coupled receptor signaling cascades, including signaling downstream of the N-formylpeptide chemoattractant receptors and leukotriene receptors. Inhibits B cell chemotaxis toward CXCL12. Inhibits signal transduction by increasing the GTPase activity of G protein alpha subunits, thereby driving them into their inactive GDP-bound form. This is Regulator of G-protein signaling 1 (Rgs1) from Rattus norvegicus (Rat).